Here is a 263-residue protein sequence, read N- to C-terminus: Non-functional protein STAY-GREEN, chloroplastic (263 aa).

The transit peptide at 1–54 (MDTLTSAPLLTSKFKPSFSPQQKPCFPHRRRFENGKKKQSIVPVARLFGPAIFE) directs the protein to the chloroplast.

Belongs to the staygreen family.

The protein localises to the plastid. Its subcellular location is the chloroplast. Its function is as follows. Non-functional protein probably interfering with the disassembling mechanism of the intact light-harvesting complex of photosystem II (LHCII) in the thylakoid membranes. Responsible for a stay-green phenotype. This chain is Non-functional protein STAY-GREEN, chloroplastic (SGR), found in Pisum sativum (Garden pea).